Consider the following 129-residue polypeptide: Thioredoxin-like 3-3 (129 aa).

Residues 1–10 are compositionally biased toward basic and acidic residues; that stretch reads MEEGEAKKTG. Positions 1 to 30 are disordered; the sequence is MEEGEAKKTGLEGTGLSLPGSSHGNLRSAG. The Thioredoxin domain occupies 7-129; the sequence is KKTGLEGTGL…RLHDRLWLHS (123 aa). Positions 19–30 are enriched in polar residues; sequence PGSSHGNLRSAG. Active-site nucleophile residues include cysteine 58 and cysteine 61. Residues cysteine 58 and cysteine 61 are joined by a disulfide bond.

It belongs to the thioredoxin family.

In terms of biological role, probable thiol-disulfide oxidoreductase that may participate in various redox reactions. The chain is Thioredoxin-like 3-3 from Oryza sativa subsp. japonica (Rice).